Reading from the N-terminus, the 82-residue chain is Cytochrome b559 subunit alpha (82 aa).

The chain crosses the membrane as a helical span at residues 22–36 (VIHAVTLPSIFLAGF). A heme-binding site is contributed by His24.

This sequence belongs to the PsbE/PsbF family. Heterodimer of an alpha subunit and a beta subunit. PSII is composed of 1 copy each of membrane proteins PsbA, PsbB, PsbC, PsbD, PsbE, PsbF, PsbH, PsbI, PsbJ, PsbK, PsbL, PsbM, PsbT, PsbX, PsbY, PsbZ, Psb30/Ycf12, peripheral proteins PsbO, CyanoQ (PsbQ), PsbU, PsbV and a large number of cofactors. It forms dimeric complexes. Heme b is required as a cofactor.

It localises to the cellular thylakoid membrane. Its function is as follows. This b-type cytochrome is tightly associated with the reaction center of photosystem II (PSII). PSII is a light-driven water:plastoquinone oxidoreductase that uses light energy to abstract electrons from H(2)O, generating O(2) and a proton gradient subsequently used for ATP formation. It consists of a core antenna complex that captures photons, and an electron transfer chain that converts photonic excitation into a charge separation. The polypeptide is Cytochrome b559 subunit alpha (Synechococcus sp. (strain CC9605)).